The sequence spans 501 residues: Serine/threonine-protein kinase pelle (501 aa).

A disordered region spans residues 1-25 (MSGVQTAEAEAQAQNQANGNRTRSR). Residues 7–18 (AEAEAQAQNQAN) are compositionally biased toward low complexity. One can recognise a Death domain in the interval 55–121 (WQQLATAVKL…NAMRLIKDYV (67 aa)). The interval 144–176 (DSSAKVNNGPPFPSSSGVSNSNNNRTSTTATEE) is disordered. Residues 149–167 (VNNGPPFPSSSGVSNSNNN) show a composition bias toward low complexity. The region spanning 213 to 499 (WSPDNRLGQG…AVLKRFEPFV (287 aa)) is the Protein kinase domain. ATP is bound by residues 219–227 (LGQGGFGDV) and K240. The active-site Proton acceptor is the D346. Residues 348-351 (KPAN) and D364 contribute to the ATP site.

This sequence belongs to the protein kinase superfamily. TKL Ser/Thr protein kinase family. Pelle subfamily. As to quaternary structure, interacts (via Death domain) with tub (via Death domain). Interacts with Pellino (Pli).

The protein localises to the cell membrane. The protein resides in the cytoplasm. The enzyme catalyses L-seryl-[protein] + ATP = O-phospho-L-seryl-[protein] + ADP + H(+). It catalyses the reaction L-threonyl-[protein] + ATP = O-phospho-L-threonyl-[protein] + ADP + H(+). Plays an essential role in the Tl receptor signaling pathway that establishes embryonic dorsoventral polarity; the signal directs import of dl into ventral and ventrolateral nuclei, thereby establishing dorsoventral polarity. Tub recruits pll to the plasma membrane and protein-protein interaction activates pll. The protein is Serine/threonine-protein kinase pelle (pll) of Drosophila melanogaster (Fruit fly).